The primary structure comprises 360 residues: Ribosomal RNA large subunit methyltransferase M (360 aa).

S-adenosyl-L-methionine contacts are provided by residues serine 190, 223–226, aspartate 242, aspartate 262, and aspartate 280; that span reads CPGG. Catalysis depends on lysine 309, which acts as the Proton acceptor.

The protein belongs to the class I-like SAM-binding methyltransferase superfamily. RNA methyltransferase RlmE family. RlmM subfamily. In terms of assembly, monomer.

It is found in the cytoplasm. It carries out the reaction cytidine(2498) in 23S rRNA + S-adenosyl-L-methionine = 2'-O-methylcytidine(2498) in 23S rRNA + S-adenosyl-L-homocysteine + H(+). Functionally, catalyzes the 2'-O-methylation at nucleotide C2498 in 23S rRNA. The sequence is that of Ribosomal RNA large subunit methyltransferase M from Haemophilus ducreyi (strain 35000HP / ATCC 700724).